We begin with the raw amino-acid sequence, 164 residues long: HTH-type transcriptional regulator IscR (164 aa).

The HTH rrf2-type domain maps to 2–131 (RLTSKGRYAV…NNITLDELVN (130 aa)). The H-T-H motif DNA-binding region spans 28 to 51 (LADISERQGISLSYLEQLFSRLRK). Positions 92, 98, and 104 each coordinate [2Fe-2S] cluster.

[2Fe-2S] cluster is required as a cofactor.

Its function is as follows. Regulates the transcription of several operons and genes involved in the biogenesis of Fe-S clusters and Fe-S-containing proteins. In Pectobacterium carotovorum subsp. carotovorum (strain PC1), this protein is HTH-type transcriptional regulator IscR.